The sequence spans 443 residues: MIHDPAQLEKERPDRLRVLWLSTLAFTLMFAAWLMFGVLGVPIRKEFGLSDVQLSWISALAILNGSLWRLLAGILADRYGGRLVFTLMLFFTAIPAYLVSRAGSYEELLLYAFLVGFAGNSFSVGIAWNSAWFPKDQQGFALGVFGAGNVGASVTKFIGPALIASVPASGYLGGLIPGGWRFIPFLYAVLLVLMGFVLWFGTPRKDKRPGQGRPFLDMLKPLRYVRVWRFSLYYVVVFGAYVALSAWLPKYYVDVFGLPLHEAALLTALFIFPASLLRPVGGYLSDRFGARRIMYWTFGIILLASGVLMMPEGHIVLYTKQGAKEVMQFTMGVELFTLLVFLIGVGMGIGKAAVYKHIPTYFPQDVGAVGGLVGMLGALGGFFLPPLFAYAQAWTGLPQMTFFVLFLLAAISFLWMHLTVLKLLQQEAQHLKNDFELKGDRPC.

A run of 12 helical transmembrane segments spans residues 23–43, 56–76, 79–99, 108–128, 142–164, 182–202, 230–250, 255–275, 298–318, 329–349, 368–388, and 401–421; these read TLAFTLMFAAWLMFGVLGVPI, WISALAILNGSLWRLLAGILA, YGGRLVFTLMLFFTAIPAYLV, LLLYAFLVGFAGNSFSVGIAW, LGVFGAGNVGASVTKFIGPALIA, FIPFLYAVLLVLMGFVLWFGT, FSLYYVVVFGAYVALSAWLPK, VFGLPLHEAALLTALFIFPAS, FGIILLASGVLMMPEGHIVLY, FTMGVELFTLLVFLIGVGMGI, AVGGLVGMLGALGGFFLPPLF, and TFFVLFLLAAISFLWMHLTVL.

This sequence belongs to the major facilitator superfamily. Nitrate/nitrite porter (TC 2.A.1.8) family.

The protein localises to the cell membrane. The catalysed reaction is nitrate(in) + nitrite(out) = nitrate(out) + nitrite(in). Its function is as follows. Probable nitrate/nitrite antiporter that may be involved in nitrate import and nitrite export during anaerobic growth. The protein is Probable nitrate/nitrite antiporter NarK1 of Thermus thermophilus.